Here is a 471-residue protein sequence, read N- to C-terminus: MTKVRVRGIYATALTKIMLEDGYDIVQATDTILSRFNILHSTEPPDVTIKDDENIPGALFIIGKCSEVNKVLESILRRVGDVAYNKPPVPLYSVIMGVVADNGHIEVAPGVLALLEGSNYFRPGDKLPVTMVNVTGQLRASPYIMPTTSYLRVIDSPTVRLSRHIKDPDAKMMLVRVGLSKINQLGGLGIRWRSSAQYLSEEDAEKALDEAISLVNAIRVKIAEARDYDMLFEGECIVSVILDAEARWVLDDIRNTIVPTVKGHHALKITMKNTEILDYTEYLVGELKMRDELGRALANYALSNLSTINVHHVKVNGEHINLGPGERVHYSNGLLIIRRELKPGGTLDGLNVAKEYGDAAYSVINIGERHLTHIYVSHDGSFKGAYVNINTPIEVTWDGVIYIDLEVDLTVDKGFNVNIIDEDKLSSIPSRRLINEAEEELSRLKGDVVNLVRNHIDTLSKLGLSIHYQGP.

The protein belongs to the FAU-1 family.

Functionally, probable RNase involved in rRNA stability through maturation and/or degradation of precursor rRNAs. Binds to RNA in loop regions with AU-rich sequences. The chain is Probable ribonuclease FAU-1 from Caldivirga maquilingensis (strain ATCC 700844 / DSM 13496 / JCM 10307 / IC-167).